The primary structure comprises 482 residues: Ras GTPase-activating protein-binding protein 2 (482 aa).

The region spanning Val11–Tyr133 is the NTF2 domain. Over residues Asp140 to Glu158 the composition is skewed to acidic residues. Disordered stretches follow at residues Asp140–Asn170 and Glu187–Asp318. Phosphoserine occurs at positions 141, 149, and 225. The segment at Glu142–Glu220 is acidic disordered region. The span at Glu191 to Ser225 shows a compositional bias: basic and acidic residues. Thr227 is modified (phosphothreonine). The span at Ala247–Gly264 shows a compositional bias: polar residues. A Glycyl lysine isopeptide (Lys-Gly) (interchain with G-Cter in SUMO2) cross-link involves residue Lys281. Residues Arg290–Pro300 are compositionally biased toward basic and acidic residues. The RRM domain occupies His331 to Thr409. N6-succinyllysine is present on Lys392. The interval Val404–Arg476 is RG-rich region. Basic and acidic residues predominate over residues Lys408–Arg432. Residues Lys408–Arg482 are disordered. Gly residues predominate over residues Gly433–Met445. Omega-N-methylarginine is present on Arg457. Ser466 is modified (phosphoserine). Arg468 is subject to Omega-N-methylarginine.

In terms of assembly, forms homooligomers. Forms heterodimers with G3BP1. Interacts with NFKBIA (via N-terminus). Interacts (via NTF2 domain) with USP10; inhibiting stress granule formation. Interacts (via NTF2 domain) with CAPRIN1; promoting stress granule formation. Associates (via RG-rich region) with 40S ribosome subunits. Interacts with PABPC1.

The protein localises to the cytoplasm. It localises to the stress granule. With respect to regulation, under physiological conditions, G3BP2 adopts a compact state that is stabilized by intramolecular interactions between the RG-rich and the acidic regions that inhibit phase separation. Upon stress, polysomes disassemble and mRNAs are released in an unfolded protein-free state. Binding of unfolded mRNA to G3BP2 outcompetes the intramolecular interactions and RNA-bound G3BP2 adopts an expanded conformation in which the RG-rich region becomes exposed to engage in protein-protein and protein-RNA interactions, allowing physical cross-linking of RNA molecules to form protein-RNA condensates, leading to liquid-liquid phase separation (LLPS). In terms of biological role, scaffold protein that plays an essential role in cytoplasmic stress granule formation which acts as a platform for antiviral signaling. Plays an essential role in stress granule formation. Stress granules are membraneless compartments that store mRNAs and proteins, such as stalled translation pre-initiation complexes, in response to stress. Promotes formation of stress granules phase-separated membraneless compartment by undergoing liquid-liquid phase separation (LLPS) upon unfolded RNA-binding: functions as a molecular switch that triggers RNA-dependent LLPS in response to a rise in intracellular free RNA concentrations. The polypeptide is Ras GTPase-activating protein-binding protein 2 (G3bp2) (Mus musculus (Mouse)).